Here is a 380-residue protein sequence, read N- to C-terminus: Putative 8-amino-7-oxononanoate synthase (380 aa).

Arginine 18 contributes to the substrate binding site. Residue 105 to 106 (GY) participates in pyridoxal 5'-phosphate binding. Histidine 130 provides a ligand contact to substrate. Residues serine 178, 204 to 207 (DEAH), and 235 to 238 (TFGK) each bind pyridoxal 5'-phosphate. Lysine 238 carries the post-translational modification N6-(pyridoxal phosphate)lysine. Threonine 352 provides a ligand contact to substrate.

This sequence belongs to the class-II pyridoxal-phosphate-dependent aminotransferase family. BioF subfamily. As to quaternary structure, homodimer. It depends on pyridoxal 5'-phosphate as a cofactor.

It carries out the reaction 6-carboxyhexanoyl-[ACP] + L-alanine + H(+) = (8S)-8-amino-7-oxononanoate + holo-[ACP] + CO2. It participates in cofactor biosynthesis; biotin biosynthesis. In terms of biological role, catalyzes the decarboxylative condensation of pimeloyl-[acyl-carrier protein] and L-alanine to produce 8-amino-7-oxononanoate (AON), [acyl-carrier protein], and carbon dioxide. The polypeptide is Putative 8-amino-7-oxononanoate synthase (bioF) (Glaesserella parasuis serovar 5 (strain SH0165) (Haemophilus parasuis)).